The primary structure comprises 100 residues: UPF0298 protein lp_2135 (100 aa).

The protein belongs to the UPF0298 family.

The protein resides in the cytoplasm. In Lactiplantibacillus plantarum (strain ATCC BAA-793 / NCIMB 8826 / WCFS1) (Lactobacillus plantarum), this protein is UPF0298 protein lp_2135.